Here is a 751-residue protein sequence, read N- to C-terminus: Serine/threonine-protein kinase B-raf (751 aa).

Residues 1-32 show a composition bias toward gly residues; that stretch reads MAALSGGGGSSSGGGGGGGGGGGGGDGGGGAE. Residues 1-55 are disordered; sequence MAALSGGGGSSSGGGGGGGGGGGGGDGGGGAEQGQALFNGDMEPEAGAGAAASSA. N-acetylalanine is present on Ala-2. The span at 46 to 55 shows a compositional bias: low complexity; the sequence is AGAGAAASSA. A Phosphoserine modification is found at Ser-135. An RBD domain is found at 139 to 211; it reads PIVRVFLPNK…TGEELHVEVL (73 aa). Residues His-219, Cys-232, Cys-235, Cys-245, Cys-248, His-253, Cys-256, and Cys-264 each coordinate Zn(2+). A disordered region spans residues 288-440; it reads EASFPETALP…SSDDWEIPDG (153 aa). The span at 297-324 shows a compositional bias: low complexity; the sequence is PSGSSSAPPSDSTGPQILTSPSPSKSIP. Ser-316 is modified (phosphoserine). Residues 331-346 show a composition bias toward basic and acidic residues; sequence PADEDHRNQFGQRDRS. Ser-348 is subject to Phosphoserine. Thr-356 carries the post-translational modification Phosphothreonine; by autocatalysis. Thr-379 is modified (phosphothreonine). Ser-382 carries the phosphoserine modification. The residue at position 384 (Thr-384) is a Phosphothreonine. Basic and acidic residues predominate over residues 406–432; the sequence is QRERKSSSSSSSEDRSRMKTLGRRDSS. Phosphoserine is present on residues Ser-431 and Ser-432. One can recognise a Protein kinase domain in the interval 442 to 702; that stretch reads ITVGQRIGSG…PQILASIELL (261 aa). ATP is bound by residues 448–456 and Lys-468; that span reads IGSGSFGTV. Asp-561 acts as the Proton acceptor in catalysis. Residue Lys-563 forms a Glycyl lysine isopeptide (Lys-Gly) (interchain with G-Cter in ubiquitin) linkage. The residue at position 656 (Arg-656) is an Omega-N-methylarginine; by PRMT5. Phosphoserine is present on residues Ser-714 and Ser-735. Position 738 is a phosphothreonine; by MAPK1 (Thr-738).

This sequence belongs to the protein kinase superfamily. TKL Ser/Thr protein kinase family. RAF subfamily. Monomer. Homodimer. Heterodimerizes with RAF1, and the heterodimer possesses a highly increased kinase activity compared to the respective homodimers or monomers. Heterodimerization is mitogen-regulated and enhanced by 14-3-3 proteins. MAPK1/ERK2 activation can induce a negative feedback that promotes the dissociation of the heterodimer by phosphorylating BRAF at Thr-738. Heterodimerizes (via N-terminus) with KSR1 (via N-terminus) or KSR2 (via N-terminus) in a MAP2K1-dependent manner. Interacts with MAP2K1 and MAP2K2. Found in a complex with at least BRAF, HRAS, MAP2K1, MAPK3 and RGS14. Interacts with RIT1. Interacts (via N-terminus) with RGS14 (via RBD domains); the interaction mediates the formation of a ternary complex with RAF1, a ternary complex inhibited by GNAI1. Interacts with DGKH. Interacts with PRMT5. Interacts with AKAP13, MAP2K1 and KSR1. Identified in a complex with AKAP13, KSR1 and MAP2K1. Interacts with FNIP1 and FNIP2. Zn(2+) serves as cofactor. Phosphorylation at Ser-348 by SGK1 inhibits its activity. Dephosphorylation of Ser-348 by the SHOC2-MRAS-PP1c (SMP) complex consisting of SHOC2, GTP-bound M-Ras/MRAS and the catalytic subunit of protein phosphatase 1 (PPP1CA, PPP1CB or PPP1CC); this relieves inactivation and stimulates kinase activity. Post-translationally, methylation by PRMT5 decreases stability and kinase activity. In terms of processing, ubiquitinated by RNF149; which leads to proteasomal degradation. Polyubiquitinated at Lys-615 in response to EGF.

Its subcellular location is the nucleus. The protein localises to the cytoplasm. The protein resides in the cell membrane. The enzyme catalyses L-seryl-[protein] + ATP = O-phospho-L-seryl-[protein] + ADP + H(+). The catalysed reaction is L-threonyl-[protein] + ATP = O-phospho-L-threonyl-[protein] + ADP + H(+). With respect to regulation, in quiescent cells, maintained in an inactive state via an intramolecular interaction between the protein kinase and N-terminal domains. Following mitogen-mediated cell activation, binds via its RGB domain to active HRAS (GTP-bound) which releases the inhibitory intramolecular interaction between the two domains. This allows the MAP2K1-mediated dimerization of KSR1 or KSR2, and BRAF which activates BRAF. In terms of biological role, involved in the transduction of mitogenic signals from the cell membrane to the nucleus. Phosphorylates MAP2K1, and thereby activates the MAP kinase signal transduction pathway. Phosphorylates PFKFB2. May play a role in the postsynaptic responses of hippocampal neurons. The polypeptide is Serine/threonine-protein kinase B-raf (Mus musculus (Mouse)).